We begin with the raw amino-acid sequence, 54 residues long: Salt stress-induced hydrophobic peptide ESI3 (54 aa).

The next 2 membrane-spanning stretches (helical) occupy residues 2–22 (GSAT…GVFL) and 34–54 (LLLT…VLVV).

This sequence belongs to the UPF0057 (PMP3) family.

It localises to the membrane. The protein is Salt stress-induced hydrophobic peptide ESI3 (ESI3) of Thinopyrum elongatum (Tall wheatgrass).